We begin with the raw amino-acid sequence, 579 residues long: Glucans biosynthesis protein G (579 aa).

An N-terminal signal peptide occupies residues methionine 1–alanine 37. A disordered region spans residues alanine 516–glutamate 579. Positions lysine 517–lysine 539 are enriched in basic and acidic residues.

The protein belongs to the OpgD/OpgG family.

The protein localises to the periplasm. Its pathway is glycan metabolism; osmoregulated periplasmic glucan (OPG) biosynthesis. In terms of biological role, involved in the biosynthesis of osmoregulated periplasmic glucans (OPGs). This chain is Glucans biosynthesis protein G, found in Pseudomonas putida (strain W619).